Here is a 1553-residue protein sequence, read N- to C-terminus: DNA topoisomerase 2-alpha (1553 aa).

Positions 1 to 25 (MELLDSPAPLRPLHDNPRLPKADGA) are disordered. Residues 12-25 (PLHDNPRLPKADGA) are compositionally biased toward basic and acidic residues. Residues Asn92, Asn121, 149–151 (SSN), and 162–169 (GRNGYGAK) each bind ATP. The interaction with DNA stretch occupies residues 343–345 (KKK). 377–379 (QTK) is a binding site for ATP. Residues 456–573 (CTLILTEGDS…SLLRHNFLEE (118 aa)) form the Toprim domain. Positions 462, 542, and 544 each coordinate Mg(2+). The Topo IIA-type catalytic domain occupies 716–1163 (IPSLVDGLKP…SPSDLWKEDL (448 aa)). Tyr806 (O-(5'-phospho-DNA)-tyrosine intermediate) is an active-site residue. The segment at 991 to 1000 (KLQTNLTCNS) is interaction with DNA. Disordered regions lie at residues 1095-1114 (QNKE…AATG) and 1186-1553 (TGKP…DDMF). Over residues 1098–1107 (EEEEGDESGE) the composition is skewed to acidic residues. Over residues 1242–1262 (SEKNESDEKQEGNSSGDKEPS) the composition is skewed to basic and acidic residues. Acidic residues-rich tracts occupy residues 1300 to 1310 (SESDSESDDFE) and 1334 to 1349 (SDAD…EYQE). The segment covering 1371 to 1385 (VPKEKKGKAPKEKPL) has biased composition (basic and acidic residues). Low complexity predominate over residues 1413–1432 (PRAQAVPKKPAAAKKGSTAK). The span at 1444–1454 (KKKAAPKAPRR) shows a compositional bias: basic residues. Low complexity predominate over residues 1517–1532 (SIDLTADSPAAAAPRT).

The protein belongs to the type II topoisomerase family. As to quaternary structure, homodimer. Mg(2+) serves as cofactor. The cofactor is Mn(2+). Ca(2+) is required as a cofactor.

Its subcellular location is the cytoplasm. The protein localises to the nucleus. It is found in the nucleoplasm. The protein resides in the nucleolus. It carries out the reaction ATP-dependent breakage, passage and rejoining of double-stranded DNA.. In terms of biological role, key decatenating enzyme that alters DNA topology by binding to two double-stranded DNA molecules, generating a double-stranded break in one of the strands, passing the intact strand through the broken strand, and religating the broken strand. May play a role in the regulation of circadian rhythm. The protein is DNA topoisomerase 2-alpha (TOP2A) of Gallus gallus (Chicken).